The following is a 150-amino-acid chain: UPF0178 protein PBPRA1738 (150 aa).

This sequence belongs to the UPF0178 family.

This Photobacterium profundum (strain SS9) protein is UPF0178 protein PBPRA1738.